Reading from the N-terminus, the 132-residue chain is Small ribosomal subunit protein uS8c (132 aa).

The protein belongs to the universal ribosomal protein uS8 family. In terms of assembly, part of the 30S ribosomal subunit.

The protein localises to the plastid. Its subcellular location is the chloroplast. Its function is as follows. One of the primary rRNA binding proteins, it binds directly to 16S rRNA central domain where it helps coordinate assembly of the platform of the 30S subunit. This chain is Small ribosomal subunit protein uS8c (rps8), found in Platanus occidentalis (Sycamore).